The chain runs to 228 residues: uncharacterized protein (228 aa).

Positions 11-78 constitute an HTH gntR-type domain; sequence PPVNQQIYRI…PQRGSYVNKI (68 aa). Residues 38-57 constitute a DNA-binding region (H-T-H motif); sequence EKEVSVRFNVSRQPVREAFI.

This is an uncharacterized protein from Escherichia coli O6:H1 (strain CFT073 / ATCC 700928 / UPEC).